The following is a 153-amino-acid chain: SsrA-binding protein (153 aa).

Residues 129–153 (KREDMKKKDQSREMAQALREKSKSH) are disordered.

The protein belongs to the SmpB family.

It localises to the cytoplasm. Required for rescue of stalled ribosomes mediated by trans-translation. Binds to transfer-messenger RNA (tmRNA), required for stable association of tmRNA with ribosomes. tmRNA and SmpB together mimic tRNA shape, replacing the anticodon stem-loop with SmpB. tmRNA is encoded by the ssrA gene; the 2 termini fold to resemble tRNA(Ala) and it encodes a 'tag peptide', a short internal open reading frame. During trans-translation Ala-aminoacylated tmRNA acts like a tRNA, entering the A-site of stalled ribosomes, displacing the stalled mRNA. The ribosome then switches to translate the ORF on the tmRNA; the nascent peptide is terminated with the 'tag peptide' encoded by the tmRNA and targeted for degradation. The ribosome is freed to recommence translation, which seems to be the essential function of trans-translation. The sequence is that of SsrA-binding protein from Geobacter sulfurreducens (strain ATCC 51573 / DSM 12127 / PCA).